The following is a 62-amino-acid chain: Mastoparan-AF (62 aa).

An N-terminal signal peptide occupies residues 1–25 (MKNTILILFTAFIALLGFFGMSAEA). AXPX repeat units lie at residues 25–28 (ADPI), 29–32 (ADPI), 33–36 (ADPI), and 43–46 (ADPE). The propeptide occupies 26 to 47 (DPIADPIADPISGPNAEADPEA). Position 61 is a phenylalanine amide (F61).

This sequence belongs to the MCD family. Mastoparan subfamily. In terms of tissue distribution, expressed by the venom gland.

The protein localises to the secreted. Its subcellular location is the target cell membrane. Functionally, antimicrobial and mast cell degranulating peptide. Has broad spectrum antibacterial activity against both Gram-positive and Gram-negative bacteria (S.aureus MIC=16-32 ug/ml, S.xylosus MIC=1.5 ug/ml, S.alactolyticus MIC=8 ug/ml, C.koseri MIC=4 ug/ml, E.coli MIC=4-32 ug/ml, K.pneumoniae MIC=32 ug/ml, P.aerugiosa MIC=96 ug/ml, S.choleraesuis MIC=16 ug/ml, S.typhimurium MIC=32 ug/ml, V.parahamelytics MIC=16 ug/ml). Is also active on multi-antibiotic resistant hemolytic E.coli O157:H7. Acts by affecting membrane permeability. On E.coli O157:H7, acts through multiple membrane disruption patterns, including large perforations (full opening) at apical ends (hollow tubes), vesicle budding, forming dents, and membrane corrugation and invagination leading to irregular pits or pores. Exerts 40% lower membrane permeabilization activities on E.coli O157:H7 than on the non-pathogen E.coli BL21. Shows little hemolytic activities on sheep, chicken and human erythrocytes, but with a higher activity on chicken erythrocytes. Its mast cell degranulation activity may be related to the activation of G-protein coupled receptors in mast cells as well as interaction with other proteins located in cell endosomal membranes in the mast cells. The polypeptide is Mastoparan-AF (Vespa affinis (Lesser banded hornet)).